Here is a 334-residue protein sequence, read N- to C-terminus: MKIVFFGTPEFAVPTLEKLLLNQEFEVLAVVTQPDKRRERGNKLTPSPVKNMAIAHDLPVWQPERIKKDTETLNKLKQLDADAFVVVAYGQILSQKILDMPKLGCVNVHGSILPQYRGAAPIQWCLYNGETETGITTMLMDAGMDTGAMLLKATTPIGLLDNADDVAQRLSVIGGDLLIETLYKLQQQEIQPIPQDNAAATYASLIQKQDYGLDWSRSALQLHNQIRGFYPNCTTTFRNQPLKITASFPLGAAYNDELPPELQKMLQKLPDLSQISGSPGEVVSITKGVGAIAQTGEGLLLLREVQLPGKRPQSGWDFVNGTRLTVGEVLGNGS.

111–114 (SILP) lines the (6S)-5,6,7,8-tetrahydrofolate pocket.

Belongs to the Fmt family.

The enzyme catalyses L-methionyl-tRNA(fMet) + (6R)-10-formyltetrahydrofolate = N-formyl-L-methionyl-tRNA(fMet) + (6S)-5,6,7,8-tetrahydrofolate + H(+). Functionally, attaches a formyl group to the free amino group of methionyl-tRNA(fMet). The formyl group appears to play a dual role in the initiator identity of N-formylmethionyl-tRNA by promoting its recognition by IF2 and preventing the misappropriation of this tRNA by the elongation apparatus. The chain is Methionyl-tRNA formyltransferase from Trichormus variabilis (strain ATCC 29413 / PCC 7937) (Anabaena variabilis).